We begin with the raw amino-acid sequence, 429 residues long: Dihydroorotase (429 aa).

Zn(2+)-binding residues include His-61 and His-63. Substrate contacts are provided by residues 63–65 (HYR) and Asn-95. Zn(2+) is bound by residues Asp-153, His-180, and His-233. Asn-279 contributes to the substrate binding site. Asp-306 serves as a coordination point for Zn(2+). Asp-306 is a catalytic residue. Residues His-310 and 324-325 (FG) each bind substrate.

It belongs to the metallo-dependent hydrolases superfamily. DHOase family. Class I DHOase subfamily. Requires Zn(2+) as cofactor.

The enzyme catalyses (S)-dihydroorotate + H2O = N-carbamoyl-L-aspartate + H(+). Its pathway is pyrimidine metabolism; UMP biosynthesis via de novo pathway; (S)-dihydroorotate from bicarbonate: step 3/3. Functionally, catalyzes the reversible cyclization of carbamoyl aspartate to dihydroorotate. The chain is Dihydroorotase from Ligilactobacillus salivarius (strain UCC118) (Lactobacillus salivarius).